Here is a 78-residue protein sequence, read N- to C-terminus: UPF0291 protein SE_1024 (78 aa).

The segment at 53–78 (TKVIDPEGNDVTPEKLKKIQEEKHNK) is disordered. A compositionally biased stretch (basic and acidic residues) spans 64 to 78 (TPEKLKKIQEEKHNK).

Belongs to the UPF0291 family.

The protein resides in the cytoplasm. The sequence is that of UPF0291 protein SE_1024 from Staphylococcus epidermidis (strain ATCC 12228 / FDA PCI 1200).